Consider the following 343-residue polypeptide: 7-epi-alpha-eudesmol synthase ((2E,6E)-farnesyl diphosphate cyclizing) (343 aa).

Positions 80 and 84 each coordinate Mg(2+). The DDXXD motif signature appears at 80–84 (DDQFD). A substrate-binding site is contributed by R177. Residues N223 and S227 each coordinate Mg(2+). R230 serves as a coordination point for substrate. E231 is a binding site for Mg(2+). 317 to 318 (RY) lines the substrate pocket.

Belongs to the terpene synthase family. Mg(2+) is required as a cofactor.

The catalysed reaction is (2E,6E)-farnesyl diphosphate + H2O = 7-epi-alpha-eudesmol + diphosphate. Its pathway is secondary metabolite biosynthesis; terpenoid biosynthesis. Catalyzes the conversion of (2E,6E)-farnesyl diphosphate (FPP) to yield the bicyclic sesquiterpenol 7-epi-alpha-eudesmol via a 1,10-cyclization, which requires the abstraction of the pyrophosphate from FPP to yield the (E,E)-germacradienyl cation. The only accepted substrate is (2E,6E)-farnesyl diphosphate (FPP). The chain is 7-epi-alpha-eudesmol synthase ((2E,6E)-farnesyl diphosphate cyclizing) from Streptomyces viridochromogenes (strain DSM 40736 / JCM 4977 / BCRC 1201 / Tue 494).